The sequence spans 221 residues: 7-cyano-7-deazaguanine synthase (221 aa).

9–19 (YSGGMDSFTLL) is an ATP binding site. Residues Cys-185, Cys-193, Cys-196, and Cys-199 each coordinate Zn(2+).

This sequence belongs to the QueC family. Zn(2+) is required as a cofactor.

The enzyme catalyses 7-carboxy-7-deazaguanine + NH4(+) + ATP = 7-cyano-7-deazaguanine + ADP + phosphate + H2O + H(+). It participates in purine metabolism; 7-cyano-7-deazaguanine biosynthesis. Catalyzes the ATP-dependent conversion of 7-carboxy-7-deazaguanine (CDG) to 7-cyano-7-deazaguanine (preQ(0)). In Marinobacter nauticus (strain ATCC 700491 / DSM 11845 / VT8) (Marinobacter aquaeolei), this protein is 7-cyano-7-deazaguanine synthase.